A 264-amino-acid polypeptide reads, in one-letter code: Thymidylate synthase (264 aa).

Arg21 contacts dUMP. His51 is a (6R)-5,10-methylene-5,6,7,8-tetrahydrofolate binding site. Arg126–Arg127 is a dUMP binding site. Residue Cys146 is the Nucleophile of the active site. Residues Arg166–Asp169, Asn177, and His207–Tyr209 contribute to the dUMP site. Asp169 provides a ligand contact to (6R)-5,10-methylene-5,6,7,8-tetrahydrofolate. Position 263 (Ser263) interacts with (6R)-5,10-methylene-5,6,7,8-tetrahydrofolate.

Belongs to the thymidylate synthase family. Bacterial-type ThyA subfamily. Homodimer.

The protein resides in the cytoplasm. It carries out the reaction dUMP + (6R)-5,10-methylene-5,6,7,8-tetrahydrofolate = 7,8-dihydrofolate + dTMP. It participates in pyrimidine metabolism; dTTP biosynthesis. Its function is as follows. Catalyzes the reductive methylation of 2'-deoxyuridine-5'-monophosphate (dUMP) to 2'-deoxythymidine-5'-monophosphate (dTMP) while utilizing 5,10-methylenetetrahydrofolate (mTHF) as the methyl donor and reductant in the reaction, yielding dihydrofolate (DHF) as a by-product. This enzymatic reaction provides an intracellular de novo source of dTMP, an essential precursor for DNA biosynthesis. The sequence is that of Thymidylate synthase from Laribacter hongkongensis (strain HLHK9).